Here is a 505-residue protein sequence, read N- to C-terminus: Serine carboxypeptidase-like 47 (505 aa).

A signal peptide spans 1 to 22 (MEAKTFFLFMLFIFSQSWLSTS). 3 N-linked (GlcNAc...) asparagine glycosylation sites follow: asparagine 37, asparagine 86, and asparagine 122. Cystine bridges form between cysteine 138-cysteine 378, cysteine 306-cysteine 321, and cysteine 344-cysteine 349. Residue serine 228 is part of the active site. A glycan (N-linked (GlcNAc...) asparagine) is linked at asparagine 301. Aspartate 416 is an active-site residue. Residues asparagine 432 and asparagine 444 are each glycosylated (N-linked (GlcNAc...) asparagine). The active site involves histidine 473.

It belongs to the peptidase S10 family. Expressed in roots, flowers and siliques.

It localises to the secreted. Probable carboxypeptidase. The protein is Serine carboxypeptidase-like 47 (SCPL47) of Arabidopsis thaliana (Mouse-ear cress).